A 409-amino-acid polypeptide reads, in one-letter code: Elongation factor Tu (409 aa).

In terms of domain architecture, tr-type G spans 10 to 214 (KPHVNVGTIG…AVDSYIPTPE (205 aa)). Residues 19–26 (GHVDHGKT) form a G1 region. 19-26 (GHVDHGKT) contacts GTP. Position 26 (T26) interacts with Mg(2+). The interval 60–64 (GITIN) is G2. Positions 81-84 (DCPG) are G3. Residues 81–85 (DCPGH) and 136–139 (NKAD) contribute to the GTP site. Residues 136-139 (NKAD) are G4. Positions 174–176 (SAL) are G5.

It belongs to the TRAFAC class translation factor GTPase superfamily. Classic translation factor GTPase family. EF-Tu/EF-1A subfamily. As to quaternary structure, monomer.

It localises to the cytoplasm. It carries out the reaction GTP + H2O = GDP + phosphate + H(+). Its function is as follows. GTP hydrolase that promotes the GTP-dependent binding of aminoacyl-tRNA to the A-site of ribosomes during protein biosynthesis. This Synechococcus sp. (strain JA-2-3B'a(2-13)) (Cyanobacteria bacterium Yellowstone B-Prime) protein is Elongation factor Tu.